Here is a 98-residue protein sequence, read N- to C-terminus: NADH-ubiquinone oxidoreductase chain 4L (98 aa).

The next 3 membrane-spanning stretches (helical) occupy residues 1–21 (MPFI…GLLM), 29–49 (SLLC…LLCL), and 61–81 (MILL…LVMV).

This sequence belongs to the complex I subunit 4L family. In terms of assembly, core subunit of respiratory chain NADH dehydrogenase (Complex I) which is composed of 45 different subunits.

The protein resides in the mitochondrion inner membrane. The enzyme catalyses a ubiquinone + NADH + 5 H(+)(in) = a ubiquinol + NAD(+) + 4 H(+)(out). Functionally, core subunit of the mitochondrial membrane respiratory chain NADH dehydrogenase (Complex I) which catalyzes electron transfer from NADH through the respiratory chain, using ubiquinone as an electron acceptor. Part of the enzyme membrane arm which is embedded in the lipid bilayer and involved in proton translocation. The chain is NADH-ubiquinone oxidoreductase chain 4L (MT-ND4L) from Dugong dugon (Dugong).